The sequence spans 285 residues: Cytochrome c1 (285 aa).

Residues 1 to 22 (MIRKLTLTAATALALSGGAAMA) form the signal peptide. Heme c-binding residues include Cys58, Cys61, His62, and Met207. A helical transmembrane segment spans residues 251 to 269 (AGFTAVMFLTVLSVLLYLT).

The main subunits of complex b-c1 are: cytochrome b, cytochrome c1 and the Rieske protein. Post-translationally, binds 1 heme c group covalently per subunit.

The protein localises to the cell membrane. Component of the ubiquinol-cytochrome c reductase complex (complex III or cytochrome b-c1 complex), which is a respiratory chain that generates an electrochemical potential coupled to ATP synthesis. c1 functions as an electron donor to cytochrome c. The protein is Cytochrome c1 (petC) of Cereibacter sphaeroides (Rhodobacter sphaeroides).